A 541-amino-acid chain; its full sequence is Circadian clock oscillator protein KaiC (541 aa).

Residues 1–40 (MNQSLGPSEPEKPQDNTAEDSTEPTPDNHRADLSELRGIP) are disordered. 2 consecutive KaiC domains span residues 21-268 (STEP…INIF) and 282-541 (VRVS…EEGL). A compositionally biased stretch (basic and acidic residues) spans 26-35 (PDNHRADLSE). Gly70, Thr71, Gly72, Lys73, Thr74, Leu75, Ser110, Lys245, Leu246, Arg247, Thr249, His251, Thr261, Thr311, Gly312, Thr313, Gly314, Lys315, and Thr316 together coordinate ATP. Thr74 serves as a coordination point for Mg(2+). Residues Thr316 and Glu339 each coordinate Mg(2+). Trp352 contributes to the ATP binding site. Ser452 bears the Phosphoserine; by autocatalysis mark. The residue at position 453 (Thr453) is a Phosphothreonine; by autocatalysis. Positions 472, 478, 479, 480, 482, 484, and 486 each coordinate ATP.

The protein belongs to the KaiC family. In terms of assembly, homohexamer; hexamerization is dependent on ATP-binding. The KaiABC complex composition changes during the circadian cycle to control KaiC phosphorylation. Complexes KaiC(6), KaiA(2-4):KaiC(6), KaiB(6):KaiC(6) and KaiC(6):KaiB(6):KaiA(12) are among the most important forms, many form cooperatively. KaiC interacts with SasA, activating its autokinase function and leading to RpaA activation. Requires Mg(2+) as cofactor. Post-translationally, phosphorylated on serine and threonine residues by autocatalysis. Has a 4 step phosphorylation cycle; the autokinase acts first on Thr-453, then Ser-452. When Ser-452 is modified KaiC switches to an autophosphatase mode, acting first on phospho-Thr-453 then phospho-Ser-452.

The catalysed reaction is L-seryl-[protein] + ATP = O-phospho-L-seryl-[protein] + ADP + H(+). The enzyme catalyses L-threonyl-[protein] + ATP = O-phospho-L-threonyl-[protein] + ADP + H(+). It carries out the reaction ATP + H2O = ADP + phosphate + H(+). Its activity is regulated as follows. The interaction with KaiA enhances its phosphorylation status, while the interaction with KaiB decreases it. Functionally, central component of the KaiABC oscillator complex, which constitutes the main circadian regulator in cyanobacteria. Complex composition changes during the circadian cycle to control KaiC phosphorylation. KaiA stimulates KaiC autophosphorylation, while KaiB sequesters KaiA, leading to KaiC autodephosphorylation. Clock output pathways impact the RpaA transcriptional regulator. KaiC enhances the autophosphorylation activity of SasA, which then transfers its phosphate group to RpaA to activate it. KaiB and KaiC together enhance the phospho-RpaA dephosphatase activity of CikA. In terms of biological role, has a weak, temperature-independent ATPase activity; ATPase activity defines the circadian period. The phosphorylation state of KaiC modulates its ATPase activity and effects KaiB binding. This chain is Circadian clock oscillator protein KaiC, found in Parathermosynechococcus lividus (Thermostichus lividus).